The sequence spans 228 residues: Translin (228 aa).

A DNA/RNA binding region spans residues 86-90; sequence RFHEH. The interval 177–198 is leucine-zipper; sequence LDSGFRLLNLKNDSLRKRYDGL. Lysine 187 carries the N6-acetyllysine modification. At serine 190 the chain carries Phosphoserine. Lysine 199 carries the N6-acetyllysine modification.

The protein belongs to the translin family. Ring-shaped heterooctamer of six TSN and two TSNAX subunits, DNA/RNA binding occurs inside the ring.

The protein resides in the cytoplasm. The protein localises to the nucleus. DNA-binding protein that specifically recognizes consensus sequences at the breakpoint junctions in chromosomal translocations, mostly involving immunoglobulin (Ig)/T-cell receptor gene segments. Seems to recognize single-stranded DNA ends generated by staggered breaks occurring at recombination hot spots. In terms of biological role, exhibits both single-stranded and double-stranded endoribonuclease activity. May act as an activator of RNA-induced silencing complex (RISC) by facilitating endonucleolytic cleavage of the siRNA passenger strand. The chain is Translin (TSN) from Bos taurus (Bovine).